The chain runs to 799 residues: Histidine biosynthesis trifunctional protein (799 aa).

The phosphoribosyl-AMP cyclohydrolase stretch occupies residues 1–229 (MVLPILPLID…FIVEQENVGF (229 aa)). A phosphoribosyl-ATP pyrophosphohydrolase region spans residues 230–312 (CHLETMSCFG…FYFALAKLVA (83 aa)). Residues 313 to 799 (NDVSLKDVEN…KLGLIPKDFQ (487 aa)) are histidinol dehydrogenase. Residues glutamine 618 and histidine 621 each coordinate Zn(2+). Residues glutamate 687 and histidine 688 contribute to the active site. The Zn(2+) site is built by aspartate 721 and histidine 780.

This sequence in the C-terminal section; belongs to the histidinol dehydrogenase family. The cofactor is Zn(2+).

It carries out the reaction 1-(5-phospho-beta-D-ribosyl)-5'-AMP + H2O = 1-(5-phospho-beta-D-ribosyl)-5-[(5-phospho-beta-D-ribosylamino)methylideneamino]imidazole-4-carboxamide. It catalyses the reaction 1-(5-phospho-beta-D-ribosyl)-ATP + H2O = 1-(5-phospho-beta-D-ribosyl)-5'-AMP + diphosphate + H(+). The catalysed reaction is L-histidinol + 2 NAD(+) + H2O = L-histidine + 2 NADH + 3 H(+). The protein operates within amino-acid biosynthesis; L-histidine biosynthesis; L-histidine from 5-phospho-alpha-D-ribose 1-diphosphate: step 2/9. It functions in the pathway amino-acid biosynthesis; L-histidine biosynthesis; L-histidine from 5-phospho-alpha-D-ribose 1-diphosphate: step 3/9. Its pathway is amino-acid biosynthesis; L-histidine biosynthesis; L-histidine from 5-phospho-alpha-D-ribose 1-diphosphate: step 9/9. This Saccharomyces cerevisiae (strain ATCC 204508 / S288c) (Baker's yeast) protein is Histidine biosynthesis trifunctional protein.